The primary structure comprises 82 residues: uncharacterized protein (82 aa).

This is an uncharacterized protein from Lactococcus lactis subsp. lactis (Streptococcus lactis).